We begin with the raw amino-acid sequence, 576 residues long: RING finger and SPRY domain-containing protein 1 (576 aa).

A signal peptide spans 1–16; that stretch reads MIVLGWAVFLASRSLG. Residue S50 is modified to Phosphoserine. Positions 50-99 are disordered; that stretch reads SGTDDSVDTQQQQAENSAVPTADTRSQPRDPVRPPRRGRGPHEPRRKKQN. Polar residues predominate over residues 57-68; sequence DTQQQQAENSAV. Residues 83 to 97 are compositionally biased toward basic residues; sequence PPRRGRGPHEPRRKK. The B30.2/SPRY domain occupies 300–483; sequence LFLKEGRQLT…CEFNFGAKPF (184 aa). N314 is a glycosylation site (N-linked (GlcNAc...) asparagine). The segment at 527–562 adopts an RING-type zinc-finger fold; that stretch reads CSLCCDEVADTQLKPCGHSDLCMDCALQLETCPLCR.

The protein resides in the secreted. This is RING finger and SPRY domain-containing protein 1 (RSPRY1) from Macaca fascicularis (Crab-eating macaque).